Here is a 769-residue protein sequence, read N- to C-terminus: Spastin (769 aa).

Positions 1 to 100 are disordered; it reads MVRTKNQSSS…TSGNVPRGGQ (100 aa). Over 1 to 113 the chain is Cytoplasmic; sequence MVRTKNQSSS…KQNLYVVSFP (113 aa). The interval 1 to 201 is required for localization to punctate cytoplasmic foci; it reads MVRTKNQSSS…QTLEMAASRG (201 aa). The segment covering 8–19 has biased composition (low complexity); sequence SSSSSASSSTKS. Positions 24–33 are enriched in gly residues; the sequence is SGGGGGGGGS. Over residues 54-63 the composition is skewed to polar residues; sequence SSKLSSNRQR. Over residues 64 to 78 the composition is skewed to low complexity; that stretch reads TTTTITTTTTTPGSS. The segment at residues 114 to 134 is an intramembrane region (helical); sequence IIFLFNVLRSLIYQLFCIFRY. Residues 135–769 are Cytoplasmic-facing; it reads LYGASTKVIY…WSQDYGDITI (635 aa). The segment at 199 to 769 is sufficient for interaction with microtubules and microtubule severing; it reads SRGGTGAGGY…WSQDYGDITI (571 aa). The MIT domain occupies 224 to 299; that stretch reads HRRAFEYISK…SMARDRLHFL (76 aa). The disordered stretch occupies residues 314–462; it reads KEQPKKQLPH…NAASGSGSGA (149 aa). The span at 334–344 shows a compositional bias: low complexity; the sequence is TTTSSGSSSSS. Composition is skewed to polar residues over residues 395–413 and 434–450; these read NKSQ…STSV and QFSS…RTPI. Low complexity predominate over residues 451-462; it reads NNNAASGSGSGA. Residues 452 to 466 are required for interaction with microtubules; it reads NNAASGSGSGASTPL. An ATP-binding site is contributed by 534–541; that stretch reads GPPGNGKT.

It belongs to the AAA ATPase family. Spastin subfamily. As to quaternary structure, homohexamer. The homohexamer is stabilized by ATP-binding. The homohexamer may adopt a ring conformation through which microtubules pass prior to being severed. Interacts with microtubules. Interacts with atl; may be involved in microtubule dynamics.

Its subcellular location is the membrane. The protein resides in the cytoplasm. The protein localises to the cytoskeleton. It is found in the microtubule organizing center. It localises to the centrosome. Its subcellular location is the chromosome. The protein resides in the lipid droplet. It catalyses the reaction n ATP + n H2O + a microtubule = n ADP + n phosphate + (n+1) alpha/beta tubulin heterodimers.. ATP-dependent microtubule severing protein. Stimulates microtubule minus-end depolymerization and poleward microtubule flux in the mitotic spindle. Regulates microtubule stability in the neuromuscular junction synapse. Involved in lipid metabolism by regulating the size and distribution of lipid droplets. Involved in axon regeneration by regulating microtubule severing. In Drosophila virilis (Fruit fly), this protein is Spastin.